A 768-amino-acid chain; its full sequence is P-selectin (768 aa).

The N-terminal stretch at 1 to 41 (MAGCPKGSWKPRLRSVVLGAAQLIWLSALISELVNRKKVAT) is a signal peptide. The Extracellular portion of the chain corresponds to 42 to 709 (WTYNYSTKAY…QAGTLTIQEA (668 aa)). 3 N-linked (GlcNAc...) asparagine glycosylation sites follow: N45, N54, and N107. Residues 58–158 (AFCKRHFTDL…PCFKRKRALC (101 aa)) enclose the C-type lectin domain. Cystine bridges form between C60–C158, C131–C150, C168–C183, C185–C194, C200–C244, C230–C257, C262–C306, C292–C319, C324–C368, C354–C381, C386–C430, C416–C443, C448–C492, C478–C505, C510–C554, C540–C567, C580–C624, C610–C637, C642–C686, and C672–C699. The Ca(2+) site is built by E121, N123, and N124. An a carbohydrate-binding site is contributed by N123. Residues E133 and N146 each coordinate a carbohydrate. Residues N146 and D147 each contribute to the Ca(2+) site. The region spanning 159–195 (YTASCQDMSCNSQGERIETIGSYTCSCYPGFYGPECE) is the EGF-like domain. Sushi domains lie at 198-259 (QECG…QCKA), 260-321 (VQCQ…TCEA), 322-383 (IACE…VCEA), 384-445 (LQCQ…ECQA), 446-507 (VSCT…MCEA), 508-569 (IKCP…TCKG), 578-639 (VRCP…VCRA), and 640-701 (VKCS…TCQA). N-linked (GlcNAc...) asparagine glycosylation occurs at N212. N347 carries N-linked (GlcNAc...) asparagine glycosylation. N-linked (GlcNAc...) asparagine glycosylation occurs at N456. N-linked (GlcNAc...) asparagine glycosylation occurs at N603. Residues N654, N661, and N679 are each glycosylated (N-linked (GlcNAc...) asparagine). Residues 710–733 (LTYLGGALASTSGLAVGGTLLALL) form a helical membrane-spanning segment. At 734–768 (RKRLRKKDDGKCPLNPHSHLGTYGVFTNAAYDPTP) the chain is on the cytoplasmic side. A lipid anchor (S-palmitoyl cysteine; alternate) is attached at C745. C745 carries S-stearoyl cysteine; alternate lipidation. The short motif at 756–759 (YGVF) is the Endocytosis signal element. The interval 759–768 (FTNAAYDPTP) is interaction with SNX17.

The protein belongs to the selectin/LECAM family. Interacts with SNX17. Interacts with SELPLG/PSGL1 and PODXL2 and mediates neutrophil adhesion and leukocyte rolling. This interaction requires the sialyl-Lewis X epitope of SELPLG and PODXL2, and specific tyrosine sulfation on SELPLG. Interacts (via C-type lectin domain) with alpha-IIb/beta3 integrin ITGA2B:ITGB3 and alpha-V/beta-3 integrin ITGAV:ITGB3. Interacts with alpha5/beta1 integrin ITGA5:ITGB1 and alpha4/beta1 integrin ITGA4:ITGB. Not detected in the absence of exposure to lipopolysaccharide (LPS). Detected only after exposure to lipopolysaccharide (LPS) in the tissues examined: spleen, lung, brain, liver, heart, kidney, thymus and small intestine.

The protein resides in the cell membrane. Its function is as follows. Ca(2+)-dependent receptor for myeloid cells that binds to carbohydrates on neutrophils and monocytes. Mediates the interaction of activated endothelial cells or platelets with leukocytes. The ligand recognized is sialyl-Lewis X. Mediates rapid rolling of leukocyte rolling over vascular surfaces during the initial steps in inflammation through interaction with SELPLG. Mediates cell-cell interactions and cell adhesion via the interaction with integrin alpha-IIb/beta3 (ITGA2B:ITGB3) and integrin alpha-V/beta-3 (ITGAV:ITGB3). In Rattus norvegicus (Rat), this protein is P-selectin (Selp).